We begin with the raw amino-acid sequence, 492 residues long: Glutamyl-tRNA(Gln) amidotransferase subunit A (492 aa).

Active-site charge relay system residues include Lys80 and Ser155. Ser179 acts as the Acyl-ester intermediate in catalysis.

It belongs to the amidase family. GatA subfamily. Heterotrimer of A, B and C subunits.

It catalyses the reaction L-glutamyl-tRNA(Gln) + L-glutamine + ATP + H2O = L-glutaminyl-tRNA(Gln) + L-glutamate + ADP + phosphate + H(+). Functionally, allows the formation of correctly charged Gln-tRNA(Gln) through the transamidation of misacylated Glu-tRNA(Gln) in organisms which lack glutaminyl-tRNA synthetase. The reaction takes place in the presence of glutamine and ATP through an activated gamma-phospho-Glu-tRNA(Gln). The chain is Glutamyl-tRNA(Gln) amidotransferase subunit A from Mycobacteroides abscessus (strain ATCC 19977 / DSM 44196 / CCUG 20993 / CIP 104536 / JCM 13569 / NCTC 13031 / TMC 1543 / L948) (Mycobacterium abscessus).